A 256-amino-acid chain; its full sequence is Triosephosphate isomerase (256 aa).

10–12 contributes to the substrate binding site; it reads NWK. His-97 functions as the Electrophile in the catalytic mechanism. Glu-169 functions as the Proton acceptor in the catalytic mechanism. Substrate is bound by residues Gly-175, Ser-214, and 235–236; that span reads GG.

This sequence belongs to the triosephosphate isomerase family. As to quaternary structure, homodimer.

It localises to the cytoplasm. It catalyses the reaction D-glyceraldehyde 3-phosphate = dihydroxyacetone phosphate. It participates in carbohydrate biosynthesis; gluconeogenesis. Its pathway is carbohydrate degradation; glycolysis; D-glyceraldehyde 3-phosphate from glycerone phosphate: step 1/1. Involved in the gluconeogenesis. Catalyzes stereospecifically the conversion of dihydroxyacetone phosphate (DHAP) to D-glyceraldehyde-3-phosphate (G3P). In Haemophilus ducreyi (strain 35000HP / ATCC 700724), this protein is Triosephosphate isomerase.